Reading from the N-terminus, the 203-residue chain is Probable metallo-hydrolase MJ0296 (203 aa).

Zn(2+) contacts are provided by His-86, His-88, Asp-90, His-91, His-135, Asp-152, and His-193.

It belongs to the metallo-beta-lactamase superfamily. Zn(2+) serves as cofactor.

The protein is Probable metallo-hydrolase MJ0296 of Methanocaldococcus jannaschii (strain ATCC 43067 / DSM 2661 / JAL-1 / JCM 10045 / NBRC 100440) (Methanococcus jannaschii).